The primary structure comprises 149 residues: D-aminoacyl-tRNA deacylase (149 aa).

Residues 137–138 carry the Gly-cisPro motif, important for rejection of L-amino acids motif; sequence GP.

Belongs to the DTD family. As to quaternary structure, homodimer.

It localises to the cytoplasm. It carries out the reaction glycyl-tRNA(Ala) + H2O = tRNA(Ala) + glycine + H(+). The catalysed reaction is a D-aminoacyl-tRNA + H2O = a tRNA + a D-alpha-amino acid + H(+). Its function is as follows. An aminoacyl-tRNA editing enzyme that deacylates mischarged D-aminoacyl-tRNAs. Also deacylates mischarged glycyl-tRNA(Ala), protecting cells against glycine mischarging by AlaRS. Acts via tRNA-based rather than protein-based catalysis; rejects L-amino acids rather than detecting D-amino acids in the active site. By recycling D-aminoacyl-tRNA to D-amino acids and free tRNA molecules, this enzyme counteracts the toxicity associated with the formation of D-aminoacyl-tRNA entities in vivo and helps enforce protein L-homochirality. This is D-aminoacyl-tRNA deacylase from Desulfitobacterium hafniense (strain DSM 10664 / DCB-2).